A 347-amino-acid polypeptide reads, in one-letter code: Guanine nucleotide-binding protein alpha-6 subunit (347 aa).

The G-alpha domain occupies 30–347; sequence GITQVLLLGA…IIVGHVMDLV (318 aa). The segment at 33-46 is G1 motif; sequence QVLLLGAGESGKST. GTP contacts are provided by residues 38 to 45, 172 to 178, 197 to 201, 266 to 269, and Ala-322; these read GAGESGKS, LRARVTT, DVGGQ, and NKKD. Mg(2+) is bound by residues Ser-45 and Thr-178. The segment at 170–178 is G2 motif; it reads DALRARVTT. A G3 motif region spans residues 193–202; the sequence is MKIIDVGGQR. Positions 262–269 are G4 motif; sequence ILFLNKKD. Positions 320 to 325 are G5 motif; it reads TIAVDT.

The protein belongs to the G-alpha family. In terms of assembly, g proteins are composed of 3 units; alpha, beta and gamma. The alpha chain contains the guanine nucleotide binding site.

Guanine nucleotide-binding proteins (G proteins) are involved as modulators or transducers in various transmembrane signaling systems. G alpha-6 is involved in the folic acid chemotaxis signal transduction pathway. This is Guanine nucleotide-binding protein alpha-6 subunit (gpaF) from Dictyostelium discoideum (Social amoeba).